The primary structure comprises 631 residues: MSSNSKAKPTTRENAAEPFKRALSGCIRSIAGDAEVEVAFANERPGMTGERIRLPELSKRPTLQELAVTRGLGDSMALRKACTHARIQRTMSPQGADARAIFDAVEQARVEAIGSLRMAGVAKNLNVMLEEKYAKANFATIERQADAPLGEAVALLVREKLTGQKPPASAGKVLDLWREFIEGKAAGDIEHLSSTINNQQAFARVVRDMLTSMEVAEKYGDDDNEPDEQESETDEDQPRSQEQDENASDEEAGDDAAPADENQAAEEQMEEGEMDGAEISDDDLQDEGDEDSETPGEVKRPNQPFADFNEKVDYAVFTREFDETIASEELCDEAELDRLRAFLDKQLAHLQGAVGRLANRLQRRLMAQQNRSWEFDLEEGYLDSARLQRIIIDPMQPLSFKREKDTNFRDTVVTLLIDNSGSMRGRPITVAATCADILARTLERCGVKVEILGFTTKAWKGGQSREKWLAGGKPQAPGRLNDLRHIVYKSADAPWRRARRNLGLMMREGLLKENIDGEALIWAHERLMARREQRRILMMISDGAPVDDSTLSVNPGNYLERHLRAVIEQIETRSPVELLAIGIGHDVTRYYRRAVTIVDADELAGAMTEQLAALFEDESQRRGSSRLRRAG.

Residues 218-306 (KYGDDDNEPD…EVKRPNQPFA (89 aa)) are disordered. 2 stretches are compositionally biased toward acidic residues: residues 222-235 (DDNE…ETDE) and 243-294 (QDEN…DSET). The VWFA domain maps to 412 to 631 (VVTLLIDNSG…RGSSRLRRAG (220 aa)).

Heterotrimer of CobN, CobS and CobT.

It localises to the cytoplasm. It catalyses the reaction hydrogenobyrinate a,c-diamide + Co(2+) + ATP + H2O = cob(II)yrinate a,c diamide + ADP + phosphate + 5 H(+). The protein operates within cofactor biosynthesis; adenosylcobalamin biosynthesis; cob(II)yrinate a,c-diamide from precorrin-2 (aerobic route): step 10/10. Catalyzes cobalt insertion in the corrin ring. This Sinorhizobium sp protein is Aerobic cobaltochelatase subunit CobT (cobT).